Here is a 353-residue protein sequence, read N- to C-terminus: Cytochrome bc1 complex Rieske iron-sulfur subunit (353 aa).

The disordered stretch occupies residues 1 to 51; sequence MSSQDIPEENLPAEQDRPHGAAARPADETNPFADPGLPPHEPRVQDVDERA. The span at 40 to 51 shows a compositional bias: basic and acidic residues; that stretch reads HEPRVQDVDERA. The next 3 helical transmembrane spans lie at 60–80, 99–119, and 164–184; these read ALLF…FVAI, FALG…AVHW, and LIRN…VVLL. One can recognise a Rieske domain in the interval 246–336; sequence KAALMIIRLE…IGVNDEGYLE (91 aa). [2Fe-2S] cluster contacts are provided by C279, H281, C298, and H301. An intrachain disulfide couples C284 to C300.

The protein belongs to the Rieske iron-sulfur protein family. In terms of assembly, the cytochrome bc1 complex is composed of a cytochrome b (QcrB), the Rieske iron-sulfur protein (QcrA) and a diheme cytochrome c (QcrC) subunit. [2Fe-2S] cluster serves as cofactor.

The protein resides in the cell membrane. Its function is as follows. Iron-sulfur subunit of the cytochrome bc1 complex, an essential component of the respiratory electron transport chain required for ATP synthesis. The bc1 complex catalyzes the oxidation of menaquinol and the reduction of cytochrome c in the respiratory chain. The bc1 complex operates through a Q-cycle mechanism that couples electron transfer to generation of the proton gradient that drives ATP synthesis. This Streptomyces coelicolor (strain ATCC BAA-471 / A3(2) / M145) protein is Cytochrome bc1 complex Rieske iron-sulfur subunit (qcrA).